Consider the following 414-residue polypeptide: Esterase FrsA (414 aa).

Belongs to the FrsA family.

The catalysed reaction is a carboxylic ester + H2O = an alcohol + a carboxylate + H(+). Its function is as follows. Catalyzes the hydrolysis of esters. This is Esterase FrsA from Escherichia coli O127:H6 (strain E2348/69 / EPEC).